The sequence spans 432 residues: 23S rRNA (uracil(1939)-C(5))-methyltransferase RlmD (432 aa).

Positions 1–53 (MPIGKIESLDHEARGITRQEGKAIFVDGALPGETVEYASFRRKSKFELAHLVH) constitute a TRAM domain. [4Fe-4S] cluster contacts are provided by Cys66, Cys72, Cys75, and Cys154. Residues Gln263, Phe292, Asn297, Glu313, Asn341, and Asp362 each contribute to the S-adenosyl-L-methionine site. Catalysis depends on Cys388, which acts as the Nucleophile.

It belongs to the class I-like SAM-binding methyltransferase superfamily. RNA M5U methyltransferase family. RlmD subfamily.

It catalyses the reaction uridine(1939) in 23S rRNA + S-adenosyl-L-methionine = 5-methyluridine(1939) in 23S rRNA + S-adenosyl-L-homocysteine + H(+). In terms of biological role, catalyzes the formation of 5-methyl-uridine at position 1939 (m5U1939) in 23S rRNA. The sequence is that of 23S rRNA (uracil(1939)-C(5))-methyltransferase RlmD from Dechloromonas aromatica (strain RCB).